The sequence spans 146 residues: NADPH-dependent 7-cyano-7-deazaguanine reductase (146 aa).

Cysteine 48 (thioimide intermediate) is an active-site residue. Residue aspartate 55 is the Proton donor of the active site. Substrate-binding positions include 70-72 (VES) and 89-90 (HE).

Belongs to the GTP cyclohydrolase I family. QueF type 1 subfamily.

The protein resides in the cytoplasm. It carries out the reaction 7-aminomethyl-7-carbaguanine + 2 NADP(+) = 7-cyano-7-deazaguanine + 2 NADPH + 3 H(+). It functions in the pathway tRNA modification; tRNA-queuosine biosynthesis. Catalyzes the NADPH-dependent reduction of 7-cyano-7-deazaguanine (preQ0) to 7-aminomethyl-7-deazaguanine (preQ1). This chain is NADPH-dependent 7-cyano-7-deazaguanine reductase, found in Helicobacter pylori (strain Shi470).